A 555-amino-acid chain; its full sequence is E3 ubiquitin-protein ligase ARIH1 (555 aa).

Over residues 1–47 (MDSDEGYNYEFDEDEECSEEDSGAEEEEDEDDDEPDDDNLDLGEVEL) the composition is skewed to acidic residues. The segment at 1–93 (MDSDEGYNYE…GGGGGPGHEQ (93 aa)) is disordered. Over residues 65-90 (ETGGGGGSALGPGGGGGGGGGGGGPG) the composition is skewed to gly residues. Residues 103 to 151 (TAEQILQHMVECIREVNEVIQNPATITRILLSHFNWDKEKLMERYFDGN) form a UBA-like region. Lys-140 carries the N6-acetyllysine modification. A TRIAD supradomain region spans residues 180–391 (QDMPCQICYL…SAWYNCNRYN (212 aa)). Positions 184, 187, 201, 203, 206, 209, 229, 234, 274, 279, 295, 297, 302, 305, 310, 315, 342, and 345 each coordinate Zn(2+). An RING-type 1 zinc finger spans residues 184 to 234 (CQICYLNYPNSYFTGLECGHKFCMQCWSEYLTTKIMEEGMGQTISCPAHGC). The segment at 254 to 315 (LKYQHLITNS…GENWHDPVKC (62 aa)) adopts an IBR-type zinc-finger fold. Residues 342 to 373 (CPKCHVTIEKDGGCNHMVCRNQNCKAEFCWVC) form an RING-type 2; atypical zinc finger. Cys-355 is an active-site residue. Zn(2+)-binding residues include Cys-360, Cys-365, Cys-370, Cys-373, His-380, and Cys-387. The tract at residues 406-555 (RAALQRYLFY…EKDLWEYIED (150 aa)) is ariadne domain.

This sequence belongs to the RBR family. Ariadne subfamily. In terms of assembly, interacts (via the first RING-type zinc finger) with UBE2L3. Associates with cullin-RING ubiquitin ligase (CRL) complexes containing CUL1, CUL2 and CUL3. Interacts with neddylated CUL1. Interacts with neddylated CUL2. Interacts with neddylated CUL3. Interacts with neddylated CUL4A.

Its subcellular location is the cytoplasm. It localises to the nucleus. The protein localises to the cajal body. The catalysed reaction is [E2 ubiquitin-conjugating enzyme]-S-ubiquitinyl-L-cysteine + [acceptor protein]-L-lysine = [E2 ubiquitin-conjugating enzyme]-L-cysteine + [acceptor protein]-N(6)-ubiquitinyl-L-lysine.. It functions in the pathway protein modification; protein ubiquitination. With respect to regulation, autoinhibited by the ariadne domain, which masks the second RING-type zinc finger that contains the active site and inhibits the E3 activity. Inhibition is relieved upon binding to neddylated cullin-RING ubiquitin ligase complexes, which activate the E3 ligase activity of ARIH1. Its function is as follows. E3 ubiquitin-protein ligase, which catalyzes ubiquitination of target proteins together with ubiquitin-conjugating enzyme E2 UBE2L3. Acts as an atypical E3 ubiquitin-protein ligase by working together with cullin-RING ubiquitin ligase (CRL) complexes and initiating ubiquitination of CRL substrates: associates with CRL complexes and specifically mediates addition of the first ubiquitin on CRLs targets. The initial ubiquitin is then elongated by CDC34/UBE2R1 and UBE2R2. E3 ubiquitin-protein ligase activity is activated upon binding to neddylated cullin-RING ubiquitin ligase complexes. Plays a role in protein translation in response to DNA damage by mediating ubiquitination of EIF4E2, the consequences of EIF4E2 ubiquitination are however unclear. According to a report, EIF4E2 ubiquitination leads to promote EIF4E2 cap-binding and protein translation arrest. According to another report EIF4E2 ubiquitination leads to its subsequent degradation. Acts as the ligase involved in ISGylation of EIF4E2. In vitro, controls the degradation of the LINC (LInker of Nucleoskeleton and Cytoskeleton) complex member SUN2 and may therefore have a role in the formation and localization of the LINC complex, and as a consequence, may act in nuclear subcellular localization and nuclear morphology. The polypeptide is E3 ubiquitin-protein ligase ARIH1 (ARIH1) (Bos taurus (Bovine)).